The chain runs to 872 residues: Alanine--tRNA ligase (872 aa).

Residues histidine 567, histidine 571, cysteine 669, and histidine 673 each contribute to the Zn(2+) site.

The protein belongs to the class-II aminoacyl-tRNA synthetase family. Zn(2+) serves as cofactor.

The protein resides in the cytoplasm. The enzyme catalyses tRNA(Ala) + L-alanine + ATP = L-alanyl-tRNA(Ala) + AMP + diphosphate. In terms of biological role, catalyzes the attachment of alanine to tRNA(Ala) in a two-step reaction: alanine is first activated by ATP to form Ala-AMP and then transferred to the acceptor end of tRNA(Ala). Also edits incorrectly charged Ser-tRNA(Ala) and Gly-tRNA(Ala) via its editing domain. The polypeptide is Alanine--tRNA ligase (Streptococcus gordonii (strain Challis / ATCC 35105 / BCRC 15272 / CH1 / DL1 / V288)).